Reading from the N-terminus, the 142-residue chain is Alpha-lactalbumin (142 aa).

The signal sequence occupies residues 1–19 (MRFFVPLFLVGILFPAILA). Positions 20–142 (KQFTKCELSQ…KLEQWLCEKL (123 aa)) constitute a C-type lysozyme domain. 4 cysteine pairs are disulfide-bonded: cysteine 25-cysteine 139, cysteine 47-cysteine 130, cysteine 80-cysteine 96, and cysteine 92-cysteine 110. Ca(2+) contacts are provided by threonine 57 and glutamine 58. An N-linked (GlcNAc...) asparagine glycan is attached at asparagine 64. Glutamate 68 is a Zn(2+) binding site. An N-linked (GlcNAc...) asparagine; atypical; partial glycan is attached at asparagine 90. Residues lysine 98, leucine 100, aspartate 101, aspartate 102, aspartate 103, aspartate 106, and aspartate 107 each coordinate Ca(2+). A Zn(2+)-binding site is contributed by glutamate 135.

This sequence belongs to the glycosyl hydrolase 22 family. As to quaternary structure, lactose synthase (LS) is a heterodimer of a catalytic component, beta1,4-galactosyltransferase (beta4Gal-T1) and a regulatory component, alpha-lactalbumin (LA). In terms of tissue distribution, mammary gland specific. Secreted in milk.

The protein localises to the secreted. Its function is as follows. Regulatory subunit of lactose synthase, changes the substrate specificity of galactosyltransferase in the mammary gland making glucose a good acceptor substrate for this enzyme. This enables LS to synthesize lactose, the major carbohydrate component of milk. In other tissues, galactosyltransferase transfers galactose onto the N-acetylglucosamine of the oligosaccharide chains in glycoproteins. The protein is Alpha-lactalbumin (LALBA) of Homo sapiens (Human).